The sequence spans 1478 residues: GTPase-activating protein and VPS9 domain-containing protein 1 (1478 aa).

The Ras-GAP domain occupies 147–385; the sequence is SYLLQVLRYL…AAFLDVVIGG (239 aa). At serine 227 the chain carries Phosphoserine. Phosphothreonine is present on residues threonine 390 and threonine 458. Tyrosine 460 is modified (phosphotyrosine). Serine 466 bears the Phosphoserine mark. A Phosphothreonine modification is found at threonine 470. Serine 566 and serine 569 each carry phosphoserine. 3 disordered regions span residues 574–608, 739–820, and 846–874; these read GISEGPSNRSNSVSSLDLEGESVSELGAGPSGSNG, ESCS…PPSQ, and HYARPSHPPPDPPILEGAVGGNEARLPNF. Residues 578 to 588 show a composition bias toward polar residues; sequence GPSNRSNSVSS. Phosphoserine is present on residues serine 742, serine 746, and serine 757. The span at 758–777 shows a compositional bias: polar residues; that stretch reads SRPSTPGLSVVSGISATSED. The residue at position 762 (threonine 762) is a Phosphothreonine. The residue at position 766 (serine 766) is a Phosphoserine. Residues 778–789 show a composition bias toward basic and acidic residues; sequence IPNKIEDLRSEC. Phosphoserine occurs at positions 876, 902, 903, 908, 914, and 966. Over residues 889–902 the composition is skewed to basic and acidic residues; it reads QRHSYPERLVRSRS. 2 disordered regions span residues 889-1023 and 1043-1064; these read QRHS…PRLS and TSPSDGAMANYESTGDNHDRDL. Composition is skewed to basic and acidic residues over residues 954 to 975 and 997 to 1008; these read DSSRGETEERKDSDDEKSDRNR and EKQEKDKDDLGP. A compositionally biased stretch (polar residues) spans 1012 to 1023; that stretch reads STLTDDPSPRLS. Serine 1019, serine 1046, serine 1096, and serine 1103 each carry phosphoserine. Positions 1338-1478 constitute a VPS9 domain; sequence ILRDQVLHEH…EFIKTIDDRK (141 aa).

It belongs to the GAPVD1 family. Interacts with TRIP10/CIP4. Interacts with RAB5A. In terms of assembly, (Microbial infection) Interacts with P.falciparum (strain 3D7) CK1. In terms of tissue distribution, expressed in erythrocytes (at protein level).

Its subcellular location is the membrane. The protein resides in the endosome. Acts both as a GTPase-activating protein (GAP) and a guanine nucleotide exchange factor (GEF), and participates in various processes such as endocytosis, insulin receptor internalization or LC2A4/GLUT4 trafficking. Acts as a GEF for the Ras-related protein RAB31 by exchanging bound GDP for free GTP, leading to regulate LC2A4/GLUT4 trafficking. In the absence of insulin, it maintains RAB31 in an active state and promotes a futile cycle between LC2A4/GLUT4 storage vesicles and early endosomes, retaining LC2A4/GLUT4 inside the cells. Upon insulin stimulation, it is translocated to the plasma membrane, releasing LC2A4/GLUT4 from intracellular storage vesicles. Also involved in EGFR trafficking and degradation, possibly by promoting EGFR ubiquitination and subsequent degradation by the proteasome. Has GEF activity for Rab5 and GAP activity for Ras. The sequence is that of GTPase-activating protein and VPS9 domain-containing protein 1 (GAPVD1) from Homo sapiens (Human).